The primary structure comprises 48 residues: Large ribosomal subunit protein bL33B (48 aa).

It belongs to the bacterial ribosomal protein bL33 family.

This Mycoplasma pneumoniae (strain ATCC 29342 / M129 / Subtype 1) (Mycoplasmoides pneumoniae) protein is Large ribosomal subunit protein bL33B (rpmG2).